A 157-amino-acid polypeptide reads, in one-letter code: Oocyte zinc finger protein XlCOF2 (157 aa).

C2H2-type zinc fingers lie at residues F6–H28, Y34–P56, F79–H101, F107–H129, and F135–H157.

It belongs to the krueppel C2H2-type zinc-finger protein family.

It localises to the nucleus. Functionally, may be involved in transcriptional regulation. This Xenopus laevis (African clawed frog) protein is Oocyte zinc finger protein XlCOF2.